The primary structure comprises 194 residues: ATP-dependent Clp protease proteolytic subunit (194 aa).

Ser-97 (nucleophile) is an active-site residue. His-122 is a catalytic residue.

This sequence belongs to the peptidase S14 family. In terms of assembly, fourteen ClpP subunits assemble into 2 heptameric rings which stack back to back to give a disk-like structure with a central cavity, resembling the structure of eukaryotic proteasomes.

The protein resides in the cytoplasm. It catalyses the reaction Hydrolysis of proteins to small peptides in the presence of ATP and magnesium. alpha-casein is the usual test substrate. In the absence of ATP, only oligopeptides shorter than five residues are hydrolyzed (such as succinyl-Leu-Tyr-|-NHMec, and Leu-Tyr-Leu-|-Tyr-Trp, in which cleavage of the -Tyr-|-Leu- and -Tyr-|-Trp bonds also occurs).. In terms of biological role, cleaves peptides in various proteins in a process that requires ATP hydrolysis. Has a chymotrypsin-like activity. Plays a major role in the degradation of misfolded proteins. This is ATP-dependent Clp protease proteolytic subunit from Lactobacillus delbrueckii subsp. bulgaricus (strain ATCC BAA-365 / Lb-18).